The following is a 297-amino-acid chain: Bifunctional protein FolD 2 (297 aa).

Residues glycine 164–serine 166, serine 193, and isoleucine 234 contribute to the NADP(+) site.

This sequence belongs to the tetrahydrofolate dehydrogenase/cyclohydrolase family. Homodimer.

It catalyses the reaction (6R)-5,10-methylene-5,6,7,8-tetrahydrofolate + NADP(+) = (6R)-5,10-methenyltetrahydrofolate + NADPH. The catalysed reaction is (6R)-5,10-methenyltetrahydrofolate + H2O = (6R)-10-formyltetrahydrofolate + H(+). The protein operates within one-carbon metabolism; tetrahydrofolate interconversion. Catalyzes the oxidation of 5,10-methylenetetrahydrofolate to 5,10-methenyltetrahydrofolate and then the hydrolysis of 5,10-methenyltetrahydrofolate to 10-formyltetrahydrofolate. The protein is Bifunctional protein FolD 2 of Haloarcula marismortui (strain ATCC 43049 / DSM 3752 / JCM 8966 / VKM B-1809) (Halobacterium marismortui).